The following is a 469-amino-acid chain: Carboxypeptidase Q (469 aa).

The N-terminal stretch at 1 to 19 is a signal peptide; it reads MKTLILTLLSLYELQLCCG. Residues 20–42 constitute a propeptide that is removed on maturation; it reads AYNQNIRSQRKFEMIKTEISSYK. 2 N-linked (GlcNAc...) asparagine glycosylation sites follow: N59 and N159. H288 and D300 together coordinate Zn(2+). E334 serves as the catalytic Nucleophile. E335 contacts Zn(2+). The N-linked (GlcNAc...) asparagine glycan is linked to N351. D362 provides a ligand contact to Zn(2+). The N-linked (GlcNAc...) asparagine glycan is linked to N394. Residue H432 coordinates Zn(2+).

Belongs to the peptidase M28 family. As to quaternary structure, homodimer. The monomeric form is inactive while the homodimer is active.

The protein localises to the endoplasmic reticulum. Its subcellular location is the golgi apparatus. It localises to the lysosome. The protein resides in the secreted. In terms of biological role, carboxypeptidase that may play an important role in the hydrolysis of circulating peptides. Catalyzes more efficiently the hydrolysis of dipeptides with unsubstituted terminals into amino acids. The sequence is that of Carboxypeptidase Q (cpq) from Xenopus laevis (African clawed frog).